The primary structure comprises 55 residues: Large ribosomal subunit protein bL33 (55 aa).

This sequence belongs to the bacterial ribosomal protein bL33 family.

The sequence is that of Large ribosomal subunit protein bL33 from Parvibaculum lavamentivorans (strain DS-1 / DSM 13023 / NCIMB 13966).